The chain runs to 348 residues: Outer membrane protein assembly factor BamC (348 aa).

An N-terminal signal peptide occupies residues Met1–Ala24. Cys25 carries the N-palmitoyl cysteine lipid modification. Residue Cys25 is the site of S-diacylglycerol cysteine attachment. Residues Ser211–Val230 form a disordered region.

It belongs to the BamC family. Part of the Bam complex, which is composed of the outer membrane protein BamA, and four lipoproteins BamB, BamC, BamD and BamE.

The protein localises to the cell outer membrane. In terms of biological role, part of the outer membrane protein assembly complex, which is involved in assembly and insertion of beta-barrel proteins into the outer membrane. In Xenorhabdus nematophila (strain ATCC 19061 / DSM 3370 / CCUG 14189 / LMG 1036 / NCIMB 9965 / AN6), this protein is Outer membrane protein assembly factor BamC.